We begin with the raw amino-acid sequence, 720 residues long: Nucleolar protein 11 (720 aa).

The disordered stretch occupies residues 365-392 (KDPETKPSNAGAQKKTRERKTNANAGNG).

The protein localises to the nucleus. It is found in the nucleolus. Its function is as follows. Ribosome biogenesis factor. May be required for both optimal rDNA transcription and pre-rRNA processing. The sequence is that of Nucleolar protein 11 (nol11) from Xenopus laevis (African clawed frog).